The chain runs to 164 residues: S-ribosylhomocysteine lyase (164 aa).

Fe cation contacts are provided by H54, H58, and C128.

Belongs to the LuxS family. In terms of assembly, homodimer. The cofactor is Fe cation.

It carries out the reaction S-(5-deoxy-D-ribos-5-yl)-L-homocysteine = (S)-4,5-dihydroxypentane-2,3-dione + L-homocysteine. In terms of biological role, involved in the synthesis of autoinducer 2 (AI-2) which is secreted by bacteria and is used to communicate both the cell density and the metabolic potential of the environment. The regulation of gene expression in response to changes in cell density is called quorum sensing. Catalyzes the transformation of S-ribosylhomocysteine (RHC) to homocysteine (HC) and 4,5-dihydroxy-2,3-pentadione (DPD). This chain is S-ribosylhomocysteine lyase, found in Campylobacter jejuni subsp. jejuni serotype O:6 (strain 81116 / NCTC 11828).